A 301-amino-acid chain; its full sequence is Acetylglutamate kinase (301 aa).

Residues 68–69, Arg90, and Asn195 contribute to the substrate site; that span reads GG.

This sequence belongs to the acetylglutamate kinase family. ArgB subfamily.

Its subcellular location is the cytoplasm. It catalyses the reaction N-acetyl-L-glutamate + ATP = N-acetyl-L-glutamyl 5-phosphate + ADP. It participates in amino-acid biosynthesis; L-arginine biosynthesis; N(2)-acetyl-L-ornithine from L-glutamate: step 2/4. In terms of biological role, catalyzes the ATP-dependent phosphorylation of N-acetyl-L-glutamate. This Pseudomonas fluorescens (strain ATCC BAA-477 / NRRL B-23932 / Pf-5) protein is Acetylglutamate kinase.